The sequence spans 601 residues: DNA ligase (601 aa).

Asp258 contributes to the ATP binding site. Lys260 serves as the catalytic N6-AMP-lysine intermediate. Positions 265, 280, 310, 350, 427, and 433 each coordinate ATP. A disordered region spans residues 568–601 (DKSPEDATTTDEILEMYNKQPKKKIESPPIDESV).

It belongs to the ATP-dependent DNA ligase family. It depends on Mg(2+) as a cofactor.

It catalyses the reaction ATP + (deoxyribonucleotide)n-3'-hydroxyl + 5'-phospho-(deoxyribonucleotide)m = (deoxyribonucleotide)n+m + AMP + diphosphate.. DNA ligase that seals nicks in double-stranded DNA during DNA replication, DNA recombination and DNA repair. The protein is DNA ligase of Saccharolobus islandicus (strain L.S.2.15 / Lassen #1) (Sulfolobus islandicus).